A 548-amino-acid polypeptide reads, in one-letter code: Phenylalanine--tRNA ligase beta subunit (548 aa).

Residues 275-350 form the B5 domain; it reads LKEDVLETTS…IAYGYNKFSG (76 aa). Mg(2+) contacts are provided by D328, D334, E337, and E338.

It belongs to the phenylalanyl-tRNA synthetase beta subunit family. Type 2 subfamily. As to quaternary structure, tetramer of two alpha and two beta subunits. The cofactor is Mg(2+).

The protein resides in the cytoplasm. The enzyme catalyses tRNA(Phe) + L-phenylalanine + ATP = L-phenylalanyl-tRNA(Phe) + AMP + diphosphate + H(+). The protein is Phenylalanine--tRNA ligase beta subunit of Methanocaldococcus jannaschii (strain ATCC 43067 / DSM 2661 / JAL-1 / JCM 10045 / NBRC 100440) (Methanococcus jannaschii).